The chain runs to 408 residues: MISKKTLITRDNFDKLILPIYNPIPFIPIKGKGSRIWDQKGKEYIDFSGGIAVTSLGHCHPILNKTLKNQSKMLWHLSNIFTNEPALRLAKKLLSSSFASRIFFANSGAEANEAAFKLARYYSSKIYNFKKNKIISFYNSFHGRTFFTVSVGGQSKYSNNFGPKPAGIVHASFNDINSVKNLIDHDTCAVVVELIQGEGGVIPANLTFVQALKELCKQYNVLLIFDEIQTGIGRTGKLFYYEYYAITPDILTIAKSLGGGFPISAMLTTNEVASVIAPGIHGTTYGGNPLACAVAESVIDIINTKKVLSGVEKKSKKIISELNIINKRFKLFTEIRGRGLLIGIVLKPNVSRNIHKILNFSLSEGVIFLTAGNNVIRLAPSLIIKELDIIEGMKRFYRALEKYLSRKE.

Pyridoxal 5'-phosphate contacts are provided by residues Gly-108–Ala-109 and Phe-141. Arg-144 is a binding site for N(2)-acetyl-L-ornithine. Asp-226–Gln-229 lines the pyridoxal 5'-phosphate pocket. At Lys-255 the chain carries N6-(pyridoxal phosphate)lysine. Position 283 (Thr-283) interacts with N(2)-acetyl-L-ornithine. Thr-284 contacts pyridoxal 5'-phosphate.

This sequence belongs to the class-III pyridoxal-phosphate-dependent aminotransferase family. ArgD subfamily. Homodimer. The cofactor is pyridoxal 5'-phosphate.

The protein localises to the cytoplasm. It carries out the reaction N(2)-acetyl-L-ornithine + 2-oxoglutarate = N-acetyl-L-glutamate 5-semialdehyde + L-glutamate. It catalyses the reaction N-succinyl-(2S,6S)-2,6-diaminopimelate + 2-oxoglutarate = (S)-2-succinylamino-6-oxoheptanedioate + L-glutamate. It participates in amino-acid biosynthesis; L-arginine biosynthesis; N(2)-acetyl-L-ornithine from L-glutamate: step 4/4. The protein operates within amino-acid biosynthesis; L-lysine biosynthesis via DAP pathway; LL-2,6-diaminopimelate from (S)-tetrahydrodipicolinate (succinylase route): step 2/3. Involved in both the arginine and lysine biosynthetic pathways. This Buchnera aphidicola subsp. Acyrthosiphon pisum (strain APS) (Acyrthosiphon pisum symbiotic bacterium) protein is Acetylornithine/succinyldiaminopimelate aminotransferase.